The primary structure comprises 1216 residues: AF4/FMR2 family member 1 (1216 aa).

6 disordered regions span residues 1-52 (MAAH…KGDE), 68-104 (KEFLSSKSHPHRLDGSEDRPGKPRYPLGHDRGNGAAS), 116-139 (IHTSAPGSRPVGNISHSPKMAQPR), 152-217 (PRLT…VSSK), 244-275 (AVTSLGSAPPQPPCQTFPPPPLPSKSAAMQQK), and 352-728 (SWPP…RTSG). Basic and acidic residues-rich tracts occupy residues 9–35 (NEDRNLLRIREKERRNQEAHQEKEAFP) and 78–99 (HRLDGSEDRPGKPRYPLGHDRG). Over residues 166–182 (RKCDRRAEGDSAPERKL) the composition is skewed to basic and acidic residues. A phosphoserine mark is found at serine 183, serine 191, and serine 197. Low complexity predominate over residues 207–217 (SKAHSSGVSSK). Residues 252–266 (PPQPPCQTFPPPPLP) show a composition bias toward pro residues. Polar residues predominate over residues 383 to 406 (PATQSQKQYDTPSKTHPNPQQGTS). Residues 408–424 (LEDDLQLSDSEDSDTEQ) show a composition bias toward acidic residues. Residues 429-438 (PPSPPAPPSA) are compositionally biased toward pro residues. Over residues 457-484 (ESSESDSSSDSESESSSSDSEEEEENEP) the composition is skewed to acidic residues. Lysine 682 carries the N6-acetyllysine modification. Low complexity predominate over residues 710 to 728 (SQGPSHSSRGSSGSVRTSG). Residues serine 755 and serine 760 each carry the phosphoserine modification. Disordered regions lie at residues 777–969 (RIPQ…RQQA) and 1094–1125 (APSPCTARSTGVPSPLSPMPSPASSVGSQSSA). A compositionally biased stretch (basic and acidic residues) spans 789–808 (RKAEDKQLSAGKKQDSETKS). Low complexity-rich tracts occupy residues 824-846 (KKSTVTRDTNWISRRASSSSSHT), 867-886 (PPASASSVSSSSSSQKPSRP), 902-915 (PPRSASSTKSSSTD), and 1115-1125 (PASSVGSQSSA).

This sequence belongs to the AF4 family. Component of the super elongation complex (SEC), at least composed of EAF1, EAF2, CDK9, MLLT3/AF9, AFF (AFF1 or AFF4), the P-TEFb complex and ELL (ELL, ELL2 or ELL3).

It is found in the nucleus. This chain is AF4/FMR2 family member 1 (Aff1), found in Mus musculus (Mouse).